The sequence spans 3117 residues: Centrosome-associated protein 350 (3117 aa).

Residues 1 to 24 are disordered; the sequence is MRSSKSKEVPLPNPRNSQSKDTVQ. Residues 14–24 are compositionally biased toward polar residues; sequence PRNSQSKDTVQ. Phosphoserine is present on residues S86, S139, S142, and S218. Disordered regions lie at residues 249–275, 436–514, 548–625, and 671–722; these read PKAL…ILKR, ILGP…NKQE, TVEL…TEQK, and LEEP…PPQP. Positions 255-267 are enriched in low complexity; it reads TDSSPSSTSTSNS. The segment covering 469–501 has biased composition (basic and acidic residues); the sequence is GRAESDPRLDVLHRHLQRNSERSRSKSRSENNI. S473 and S507 each carry phosphoserine. The span at 563–573 shows a compositional bias: basic residues; that stretch reads PRSHSPVKRKP. Composition is skewed to basic and acidic residues over residues 591–625 and 694–703; these read YDTD…TEQK and ESDKENKVQE. Residues 598-645 adopt a coiled-coil conformation; that stretch reads QYIVRQQEERKRKQNEEKKAQKEATEQKNKRLQELYRKQKEAFTKVKN. S695 carries the phosphoserine modification. The span at 705 to 718 shows a compositional bias: low complexity; that stretch reads PPSASSSSDMSLSE. T878 is modified (phosphothreonine). Phosphoserine is present on S939. Residues 981–992 are compositionally biased toward low complexity; that stretch reads SVSEGPLLSEGS. The tract at residues 981-1002 is disordered; the sequence is SVSEGPLLSEGSLSEEEGDQDG. A Phosphoserine modification is found at S1061. The disordered stretch occupies residues 1081-1298; sequence EDKLDRGTST…GFKPNAPLTD (218 aa). Over residues 1087–1102 the composition is skewed to polar residues; that stretch reads GTSTSRPLNATATPLS. Residues 1135–1144 are compositionally biased toward basic and acidic residues; sequence QEDHSNRKSA. 2 stretches are compositionally biased toward low complexity: residues 1153 to 1172 and 1251 to 1267; these read TSQH…STSS and QKTP…KSLQ. T1253 carries the phosphothreonine modification. A phosphoserine mark is found at S1256 and S1259. Residues 1272-1283 show a composition bias toward polar residues; sequence GTSSERSKSSVM. Residues 1369–1411 adopt a coiled-coil conformation; sequence IKAQQQRHERDLALLKLKAEQEALESQRQLEETRNKAAQVHAE. Disordered stretches follow at residues 1494 to 1674 and 1794 to 1854; these read TRTE…GGQD and KLKS…SRMD. Residues 1503-1512 show a composition bias toward polar residues; it reads PSVSLSQSKE. 2 stretches are compositionally biased toward low complexity: residues 1522-1535 and 1543-1556; these read YSAS…SSGY and SSGS…SVPS. Positions 1558–1571 are enriched in basic and acidic residues; the sequence is KENEKKLNGEKIES. At S1613 the chain carries Phosphoserine. The span at 1631-1647 shows a compositional bias: basic and acidic residues; the sequence is ESHRRFNMEKRRGHHDD. Residues S1648 and S1653 each carry the phosphoserine modification. Residues 1707–1800 adopt a coiled-coil conformation; that stretch reads KALKEKTKAE…LQEKLKSAGE (94 aa). Over residues 1794–1815 the composition is skewed to basic and acidic residues; it reads KLKSAGESKLDSHSDDDTKDNK. S1818 bears the Phosphoserine mark. Low complexity predominate over residues 1827–1841; sequence RSPSPISISSSETSS. Positions 1856 to 1899 form a coiled coil; it reads KFLTKREQKLMQRRQHAEELLEWKRRLDAEEAEIRQMEKQALAA. A compositionally biased stretch (basic and acidic residues) spans 1903 to 1925; the sequence is ELIKPKTPKKELEDQRTEQKEIA. Disordered stretches follow at residues 1903–2020, 2107–2221, 2329–2356, and 2407–2432; these read ELIK…QCHL, ELSQ…ESGD, LKER…QKNT, and KDSQ…FGSN. The residue at position 1936 (S1936) is a Phosphoserine. Residues 1983–2005 are compositionally biased toward polar residues; the sequence is ELESSTSPSKHSLPKSCTSVSKQ. Residues 2051–2110 adopt a coiled-coil conformation; sequence EGRIRALKDELRKRKSVVNQLKKEQKKRQKERLKAQEASLIKQLESYDEFIKKTEAELSQ. Positions 2111–2129 are enriched in polar residues; that stretch reads DLETSPTAKPQIKTLSSAS. Position 2115 is a phosphoserine (S2115). Residues 2141 to 2170 are compositionally biased toward basic and acidic residues; that stretch reads HRSETAKNWKSLTESERSRGSLESIAEHVD. Positions 2173-2184 are enriched in polar residues; sequence LSGSERSVSERS. A compositionally biased stretch (basic and acidic residues) spans 2191 to 2201; it reads RVNEWDSRTED. T2204 carries the post-translational modification Phosphothreonine. Position 2206 is a phosphoserine (S2206). Composition is skewed to basic and acidic residues over residues 2329–2338 and 2407–2417; these read LKERQSDQDM and KDSQSCRDKPQ. A compositionally biased stretch (polar residues) spans 2419–2432; sequence MRSSTSGATSFGSN. S2431 and S2460 each carry phosphoserine. Residues 2465–2478 are compositionally biased toward basic and acidic residues; sequence MKSKERSDVEHEQQ. Residues 2465 to 2485 form a disordered region; the sequence is MKSKERSDVEHEQQVTESPSL. The CAP-Gly domain occupies 2517–2559; sequence GETSFAKGFWAGVELDKPEGNNNGTYDGIAYFECKEKHGIFAP. T2689 is subject to Phosphothreonine. Residues 2719–2752 are a coiled coil; the sequence is LLDLLTREKNQLEAQLKSSLNEEKKSKQQLEKIS. Phosphoserine is present on residues S2830 and S2839.

In terms of assembly, part of a ternary complex that contains CEP350, CEP43 and MAPRE1. Interacts (via C-terminus) directly with CEP43 (via N-terminus). Interacts with NR1H3, PPARA, PPARD and PPARG. Interacts directly with microtubules. Interacts with the fusion protein CEP43-FGFR1, and by doing so recruits and activates PI3K and PLC-gamma. Interacts with CYLD. Interacts with CFAP157. Interacts with CEP19 (via C-terminus). Interacts with CEP78; promoting CEP78 localization to centrosome and centriole. Phosphorylated during mitosis. Detected in heart, brain, skeletal muscle, testis, placenta, lung, liver, kidney and pancreas.

Its subcellular location is the cytoplasm. It is found in the cytoskeleton. It localises to the microtubule organizing center. The protein localises to the centrosome. The protein resides in the spindle. Its subcellular location is the nucleus. It is found in the centriole. It localises to the cilium basal body. Functionally, plays an essential role in centriole growth by stabilizing a procentriolar seed composed of at least, SASS6 and CPAP. Required for anchoring microtubules to the centrosomes and for the integrity of the microtubule network. Recruits PPARA to discrete subcellular compartments and thereby modulates PPARA activity. Required for ciliation. The protein is Centrosome-associated protein 350 of Homo sapiens (Human).